Here is a 618-residue protein sequence, read N- to C-terminus: Syncytin-B (618 aa).

Positions 1–17 are cleaved as a signal peptide; the sequence is MTGFWVLCFVLFPSSLS. The Extracellular segment spans residues 18–545; that stretch reads YPESWMPLVN…SWGQWPDLGR (528 aa). A glycan (N-linked (GlcNAc...) asparagine) is linked at Asn27. Residues 44-47 carry the CXXC motif; it reads CWVC. Disulfide bonds link Cys44-Cys47, Cys44-Cys507, and Cys499-Cys506. N-linked (GlcNAc...) asparagine glycosylation is found at Asn184, Asn274, and Asn357. Residues 422 to 442 are fusion peptide; the sequence is LFPFLAGLGISSALGTGIAGL. The tract at residues 482–498 is immunosuppression; sequence LQNRRALDLITAEKGGT. A CX6CC motif is present at residues 499 to 507; the sequence is CLFLQEECC. Residues 546 to 566 form a helical membrane-spanning segment; that stretch reads WLPWLTPFLGPLLFLFFLLTF. At 567–618 the chain is on the cytoplasmic side; the sequence is GSCLLNCLTRFVSQRLGSFVQDTAKRHVDSILQNFQYKKLPQDSPDEDTIPT.

It belongs to the gamma type-C retroviral envelope protein family. As to quaternary structure, the mature protein consists of a trimer of SU-TM heterodimers. The SU-TM heterodimers are attached by a labile interchain disulfide bond. Synthesized as an inactive precursor that is heavily N-glycosylated and processed likely by furin in the Golgi to yield the mature SU and TM proteins. The cleavage site between SU and TM requires the minimal sequence [KR]-X-[KR]-R. In terms of processing, the CXXC motif is highly conserved across a broad range of retroviral envelope proteins. It is thought to participate in the formation of a labile disulfide bond possibly with the CX6CC motif present in the transmembrane protein. Isomerization of the intersubunit disulfide bond to an SU intrachain disulfide bond is thought to occur upon receptor recognition in order to allow membrane fusion. Highly expressed in placenta where it localizes to syncytiotrophoblasts of the labyrinthine zona. Specifically localizes to syncytiotrophoblast layer II (SynT-II). Also detected at very low levels in ovary.

It is found in the cell membrane. This endogenous retroviral envelope protein has retained its original fusogenic properties. Together with Syna, participates in trophoblast fusion and the formation of a syncytium during placenta morphogenesis. Synb is specifically involved in formation of syncytiotrophoblast layer II (SynT-II). Promotes myoblast fusion, and may play a role in regeneration of damaged muscle tissue in males. May have immunosuppressive activity. The chain is Syncytin-B from Mus musculus (Mouse).